The following is a 364-amino-acid chain: Carbamoyl phosphate synthase pyrimidine-specific small chain (364 aa).

Residues 1–169 (MKRYLVLEDG…AYPNPATGPN (169 aa)) form a CPSase region. Residues Ser-45, Gly-217, and Gly-219 each coordinate L-glutamine. One can recognise a Glutamine amidotransferase type-1 domain in the interval 169–356 (NVVVVDFGLK…IDLMAANQAT (188 aa)). The Nucleophile role is filled by Cys-244. L-glutamine is bound by residues Leu-245, Gln-248, Asn-286, Gly-288, and Tyr-289. Residues His-329 and Asp-331 contribute to the active site.

It belongs to the CarA family. In terms of assembly, composed of two chains; the small (or glutamine) chain promotes the hydrolysis of glutamine to ammonia, which is used by the large (or ammonia) chain to synthesize carbamoyl phosphate. Tetramer of heterodimers (alpha,beta)4.

The catalysed reaction is hydrogencarbonate + L-glutamine + 2 ATP + H2O = carbamoyl phosphate + L-glutamate + 2 ADP + phosphate + 2 H(+). The enzyme catalyses L-glutamine + H2O = L-glutamate + NH4(+). Its pathway is pyrimidine metabolism; UMP biosynthesis via de novo pathway; (S)-dihydroorotate from bicarbonate: step 1/3. With respect to regulation, inhibited by pyrimidine. Its function is as follows. Small subunit of the glutamine-dependent carbamoyl phosphate synthetase (CPSase). CPSase catalyzes the formation of carbamoyl phosphate from the ammonia moiety of glutamine, carbonate, and phosphate donated by ATP, constituting the first step of the biosynthetic pathway leading to pyrimidine nucleotides. The small subunit (glutamine amidotransferase) binds and cleaves glutamine to supply the large subunit with the substrate ammonia. This Lactiplantibacillus plantarum (strain ATCC BAA-793 / NCIMB 8826 / WCFS1) (Lactobacillus plantarum) protein is Carbamoyl phosphate synthase pyrimidine-specific small chain.